We begin with the raw amino-acid sequence, 521 residues long: Lysine--tRNA ligase (521 aa).

Residues 32–40 carry the 'HIGH' region motif; that stretch reads PSGTVHIGN. The short motif at 280–284 is the 'KMSKS' region element; that stretch reads KISSS.

Belongs to the class-I aminoacyl-tRNA synthetase family.

The protein resides in the cytoplasm. The catalysed reaction is tRNA(Lys) + L-lysine + ATP = L-lysyl-tRNA(Lys) + AMP + diphosphate. In Borrelia garinii subsp. bavariensis (strain ATCC BAA-2496 / DSM 23469 / PBi) (Borreliella bavariensis), this protein is Lysine--tRNA ligase.